The chain runs to 151 residues: UPF0208 membrane protein YPDSF_1972 (151 aa).

The next 2 helical transmembrane spans lie at 46 to 66 (FGIR…IALG) and 69 to 89 (LGPA…GLWW).

Belongs to the UPF0208 family.

The protein resides in the cell inner membrane. This is UPF0208 membrane protein YPDSF_1972 from Yersinia pestis (strain Pestoides F).